A 141-amino-acid chain; its full sequence is MGRVRTKTVKKSSRQVIEKYYSRMTLDFHTNKKILEEVAIIPSKRLRNKIAGFSTHLMKRIQKGPVRGISLKLQEEERERRMDFVPDESAIKTDEIKVDKETLEMLASLGMSDTPGISAVEPQQAMAPIAAFGGGRAPRRY.

The protein belongs to the eukaryotic ribosomal protein eS17 family.

The sequence is that of Small ribosomal subunit protein eS17w (RPS17D) from Arabidopsis thaliana (Mouse-ear cress).